Here is a 363-residue protein sequence, read N- to C-terminus: MSKNYHIAVLPGDGIGPEVMAQALKVMDAVRSRFDMRITTSHYDVGGIAIDNHGHPLPKATVEGCEQADAILFGSVGGPKWENLPPESQPERGALLPLRKHFKLFSNLRPAKLYQGLEAFCPLRADIAANGFDILCVRELTGGIYFGQPKGREGSGQYEKAFDTEVYHRFEIERIARIAFESARKRRRKVTSIDKANVLQSSILWREIVNDVAKTYPDVELAHMYIDNATMQLIKDPSQFDVLLCSNLFGDILSDECAMITGSMGMLPSASLNEQGFGLYEPAGGSAPDIAGKNIANPIAQILSLALLLRYSLDANDAATAIEQAINRALEEGVRTGDLARGAAAVSTDEMGDIIARYVAEGV.

78 to 91 is an NAD(+) binding site; the sequence is GPKWENLPPESQPE. Residues R99, R109, R138, and D227 each coordinate substrate. The Mg(2+) site is built by D227, D251, and D255. 285-297 is an NAD(+) binding site; that stretch reads GSAPDIAGKNIAN.

Belongs to the isocitrate and isopropylmalate dehydrogenases family. LeuB type 1 subfamily. Homodimer. Requires Mg(2+) as cofactor. Mn(2+) serves as cofactor.

Its subcellular location is the cytoplasm. The enzyme catalyses (2R,3S)-3-isopropylmalate + NAD(+) = 4-methyl-2-oxopentanoate + CO2 + NADH. The protein operates within amino-acid biosynthesis; L-leucine biosynthesis; L-leucine from 3-methyl-2-oxobutanoate: step 3/4. Functionally, catalyzes the oxidation of 3-carboxy-2-hydroxy-4-methylpentanoate (3-isopropylmalate) to 3-carboxy-4-methyl-2-oxopentanoate. The product decarboxylates to 4-methyl-2 oxopentanoate. The sequence is that of 3-isopropylmalate dehydrogenase from Salmonella choleraesuis (strain SC-B67).